Consider the following 1183-residue polypeptide: LRR receptor-like serine/threonine-protein kinase FLS2 (1183 aa).

The signal sequence occupies residues Met1 to Ala41. Topologically, residues Ala42–Gly809 are extracellular. Cys87 and Cys94 are joined by a disulfide. Residues Asn88 and Asn120 are each glycosylated (N-linked (GlcNAc...) asparagine). LRR repeat units follow at residues Ala97–Asn120, Ile121–Leu145, Glu147–Cys169, Ala171–Leu193, Ser194–Leu217, Lys218–Leu241, Ser242–Cys265, Asn267–Leu289, Thr290–Cys313, Ser315–Leu337, Pro338–Leu361, Asn363–Leu385, and Arg386–Cys409. A disulfide bond links Cys167 and Cys189. 2 N-linked (GlcNAc...) asparagine glycosylation sites follow: Asn168 and Asn181. N-linked (GlcNAc...) asparagine glycosylation occurs at Asn267. Residues Asn363, Asn395, Asn408, and Asn414 are each glycosylated (N-linked (GlcNAc...) asparagine). LRR repeat units follow at residues Leu433 to Cys457, Gln459 to Gln480, Leu481 to Met505, Lys507 to Met529, Ser530 to Leu553, Gln555 to Leu577, Arg578 to Arg600, Leu601 to Ser625, Ser627 to Leu651, Val652 to Cys675, Lys676 to Gln699, Asp701 to Leu724, Lys725 to Leu748, and Thr749 to Asn773. Residues Asn483, Asn504, and Asn528 are each glycosylated (N-linked (GlcNAc...) asparagine). Asn591 carries N-linked (GlcNAc...) asparagine glycosylation. N-linked (GlcNAc...) asparagine glycosylation is present at Asn634. N-linked (GlcNAc...) asparagine glycosylation is found at Asn707, Asn747, Asn755, and Asn773. Residues Leu810–Ile830 traverse the membrane as a helical segment. Residues Leu831 to Asp1183 lie on the Cytoplasmic side of the membrane. The 304-residue stretch at Phe876–Leu1179 folds into the Protein kinase domain. Residues Ile882–Val890 and Lys908 each bind ATP. The active-site Proton acceptor is the Asp1013.

Belongs to the protein kinase superfamily. Ser/Thr protein kinase family. In terms of assembly, interacts with SERK2.

The protein resides in the cell membrane. It catalyses the reaction L-seryl-[protein] + ATP = O-phospho-L-seryl-[protein] + ADP + H(+). The enzyme catalyses L-threonyl-[protein] + ATP = O-phospho-L-threonyl-[protein] + ADP + H(+). Functionally, constitutes the pattern-recognition receptor (PPR) that determines the specific perception of flagellin (flg22), a potent elicitor of the defense response to pathogen-associated molecular patterns (PAMPs). Recognizes flg22 from Pseudomonas aeruginosa and Acidovorax avenae. flg22 is a peptide derived from the bacterial flagellin N-terminus sequence. Does not recognize flg22 from Xanthomonas oryzae pv. oryzae (Xoo) or Xanthomonas oryzae pv. oryzicola (Xoc). This Oryza sativa subsp. japonica (Rice) protein is LRR receptor-like serine/threonine-protein kinase FLS2.